The primary structure comprises 870 residues: MNQIEQKWQQIWHDEKAFEVSNESSKPKYYVLAMLPYPSGKIHLGHVRNYSIGDVIARFMTMQGFNVLHPMGWDAFGLPAENAAIKNNSHPKDWTYSNIENMKKQLKSMGFSYAWSREINSCDPQYYKHEQKFFLELYERNLAYQKESLVNWDPVDNTVLANEQVVDGRGWRSGAVVEKRYLKQWFLKITDYAEELLNEIQNLKEWPEAVRSMQEKWIGKSIGANFHFKIKDNEDTTIEVFSTKPETIFGAGFIGIAFNHPIIERLVSKTPEISNFIAKCANITCSVELDKAEKEGVFTGLYVTHPFDSNIVLPVIITNFVLMDYGTGAVFGCPAHDERDHELAVKMNLTIKKVIETDIDVQKTPYTEDGILVNSNFLNGLTSNEAKQKVIEEFEKLEIGKCTINYRLKDWGISRQRFWGCPIPMIHCEACGIVPVPYKDLPVTLPDDVSFDGHGNPLAHHPSWKHVNCPKCNKPAIRETDTFDTFFESSWYFTRYCNSNATEMTDKKACDYWLPVDKYIGGIEHAVMHLLYARFFTKVMNEQHYVSVREPFKGLFTQGMVLHATYKDEHNNWLYPEEVVKKGNEFFRKESNDRVVQGRIEKMSKSKKNLIDLETMQKQYGADAIRLFVLSDSPPEKDLEWFVSGIEGCSRFINKLEQMFEAIKFLYNEANKEEFEGNTERSTAAYTLVREDASTGSMYKLPLEASYINKELNRLVHFTIKHVAEDIKHFALNRAIARMRELANAISSEISKDKIDVNTVRHGFNILVQLLNPFIPHITEEIWQKLGNKERLYKSDFPAFDESMLELDTYIMAVQVNGKLRDTYKFKTAASEDAIKQITVNLPKVQKFLAGKEPKKIILVPRKIVNIIVN.

The 'HIGH' region motif lies at 36–46; it reads PYPSGKIHLGH. The short motif at 602–606 is the 'KMSKS' region element; it reads KMSKS. Lys-605 is an ATP binding site.

The protein belongs to the class-I aminoacyl-tRNA synthetase family.

Its subcellular location is the cytoplasm. It carries out the reaction tRNA(Leu) + L-leucine + ATP = L-leucyl-tRNA(Leu) + AMP + diphosphate. The chain is Leucine--tRNA ligase from Rickettsia akari (strain Hartford).